A 305-amino-acid polypeptide reads, in one-letter code: Mat- sexual cell fertilization-promoting factor (305 aa).

The alpha box DNA-binding region spans 38–93 (PAKKKVNGFMGYRSYYSSMFSQLPQKERSPILTTLWQQDPFHKEWDFMCAVYSAIR).

The protein belongs to the MATALPHA1 family.

The protein resides in the nucleus. Its function is as follows. Controls fertilization, probably by determining the mating type. May be involved in the post-fertilization steps of the sexual cycle besides mat+. It is required for the developmental events that occur in the female organ after fertilization. The polypeptide is Mat- sexual cell fertilization-promoting factor (FMR1) (Podospora anserina (Pleurage anserina)).